We begin with the raw amino-acid sequence, 351 residues long: L-threonine 3-dehydrogenase (351 aa).

C39 is a Zn(2+) binding site. Residues T41 and H44 each act as charge relay system in the active site. Zn(2+) is bound by residues H64, E65, C94, C97, C100, and C108. Residues I176, D196, R201, 271–273 (LGI), and 295–296 (IY) contribute to the NAD(+) site.

Belongs to the zinc-containing alcohol dehydrogenase family. As to quaternary structure, homotetramer. The cofactor is Zn(2+).

It localises to the cytoplasm. It carries out the reaction L-threonine + NAD(+) = (2S)-2-amino-3-oxobutanoate + NADH + H(+). The protein operates within amino-acid degradation; L-threonine degradation via oxydo-reductase pathway; glycine from L-threonine: step 1/2. Its function is as follows. Catalyzes the NAD(+)-dependent oxidation of L-threonine to 2-amino-3-ketobutyrate. This Francisella tularensis subsp. holarctica (strain OSU18) protein is L-threonine 3-dehydrogenase.